Here is a 408-residue protein sequence, read N- to C-terminus: LL-diaminopimelate aminotransferase (408 aa).

Residues Tyr-15 and Gly-42 each contribute to the substrate site. Pyridoxal 5'-phosphate contacts are provided by residues Tyr-72, 108-109, Tyr-132, Asn-187, Tyr-218, and 246-248; these read SK and SFS. Residues Lys-109, Tyr-132, and Asn-187 each coordinate substrate. The residue at position 249 (Lys-249) is an N6-(pyridoxal phosphate)lysine. Residues Arg-257 and Asn-292 each contribute to the pyridoxal 5'-phosphate site. Residues Asn-292 and Arg-388 each contribute to the substrate site.

Belongs to the class-I pyridoxal-phosphate-dependent aminotransferase family. LL-diaminopimelate aminotransferase subfamily. As to quaternary structure, homodimer. Pyridoxal 5'-phosphate is required as a cofactor.

The enzyme catalyses (2S,6S)-2,6-diaminopimelate + 2-oxoglutarate = (S)-2,3,4,5-tetrahydrodipicolinate + L-glutamate + H2O + H(+). It participates in amino-acid biosynthesis; L-lysine biosynthesis via DAP pathway; LL-2,6-diaminopimelate from (S)-tetrahydrodipicolinate (aminotransferase route): step 1/1. Its function is as follows. Involved in the synthesis of meso-diaminopimelate (m-DAP or DL-DAP), required for both lysine and peptidoglycan biosynthesis. Catalyzes the direct conversion of tetrahydrodipicolinate to LL-diaminopimelate. The protein is LL-diaminopimelate aminotransferase of Leptospira biflexa serovar Patoc (strain Patoc 1 / Ames).